Reading from the N-terminus, the 144-residue chain is Ribosome-binding factor A (144 aa).

Residues 121 to 144 (KAQTGVEEPLENTAEGEENPSGGE) are disordered. Residues 128 to 138 (EPLENTAEGEE) show a composition bias toward acidic residues.

The protein belongs to the RbfA family. Monomer. Binds 30S ribosomal subunits, but not 50S ribosomal subunits or 70S ribosomes.

The protein resides in the cytoplasm. Its function is as follows. One of several proteins that assist in the late maturation steps of the functional core of the 30S ribosomal subunit. Associates with free 30S ribosomal subunits (but not with 30S subunits that are part of 70S ribosomes or polysomes). Required for efficient processing of 16S rRNA. May interact with the 5'-terminal helix region of 16S rRNA. This chain is Ribosome-binding factor A, found in Synechococcus sp. (strain JA-2-3B'a(2-13)) (Cyanobacteria bacterium Yellowstone B-Prime).